The primary structure comprises 111 residues: Anti-adapter protein IraM (111 aa).

This sequence belongs to the IraM/RssC family.

The protein resides in the cytoplasm. In terms of biological role, involved in the stabilization of the sigma stress factor RpoS. This chain is Anti-adapter protein IraM, found in Cronobacter sakazakii (strain ATCC BAA-894) (Enterobacter sakazakii).